The chain runs to 178 residues: Methyltransferase flvH (178 aa).

The Post-SET domain maps to 120 to 136; it reads QPFNCFCGSQNCLGLIA. Residues Cys124, Cys126, and Cys131 each coordinate Zn(2+).

It belongs to the class V-like SAM-binding methyltransferase superfamily.

The enzyme catalyses L-lysine + 2 S-adenosyl-L-methionine = N(6),N(6)-dimethyl-L-lysine + 2 S-adenosyl-L-homocysteine + 2 H(+). The protein operates within secondary metabolite biosynthesis; terpenoid biosynthesis. Methyltransferase; part of the gene cluster that mediates the biosynthesis of flavunoidine, an alkaloidal terpenoid with a tetracyclic cage-like core connected to dimethylcadaverine via a C-N bond and acylated with 5,5-dimethyl-L-pipecolate. The tetracyclic core is synthesized by the terpene cyclase flvE and the cytochrome P450 monooxygenase flvD. The terpene cyclase flvE catalyzes the cyclization of farnesyl pyrophosphate (FPP) to form (1R,4R,5S)-(+)-acoradiene and the cytochrome P450 monooxygenase flvD is then responsible for oxidative conversion of (1R,4R,5S)-(+)-acoradiene into the tetracyclic cage present in the final product flavunoidine. In parallel, the N-methyltransferase flvH dimethylates L-lysine to give N,N-dimethyl-L-Lysin which is decarboxylated by flvG to afford dimethylcadaverine. The terpene cyclase-like protein flvF is the enzyme that attaches the dimethylcadaverine precusor at the C-7 of the tetracyclic cage to yield pre-flavunoidine. The cytochrome monooxygenase flvC hydroxylates the C-10 position of pre-flavunoidine whereas the NRPS flvI acylates the terpenoid core at the hydroxylated C-10 with dimethylpipecolate to yield final flavunoidine. The bifunctional enzyme flvA and the dehydrogenase flvB are responsible for the synthesis of the dimethylpipecolate precursor. The PLP-dependent lyase domain of flvA might use L-O-acetyl-homoserine and alpha-keto-isovalerate to form an intermediary ketone that can cyclize intramolecularly to yield an imine. The imine can be reduced by flvB to yield the 6-carboxylated pipecolate. The C-terminal alpha-KG-dependent oxygenase domain of flvA is then proposed to catalyze the decarboxylation to yield dimethylpipecolate. The polypeptide is Methyltransferase flvH (Aspergillus flavus (strain ATCC 200026 / FGSC A1120 / IAM 13836 / NRRL 3357 / JCM 12722 / SRRC 167)).